A 286-amino-acid chain; its full sequence is Polyamine aminopropyltransferase (286 aa).

Residues 1-235 (MSDYQETLYE…GAMTFAWGAT (235 aa)) form the PABS domain. Q30 is an S-methyl-5'-thioadenosine binding site. 2 residues coordinate spermidine: H61 and D85. S-methyl-5'-thioadenosine-binding positions include E105 and 137–138 (DG). Catalysis depends on D155, which acts as the Proton acceptor. 155–158 (DSTD) serves as a coordination point for spermidine. P162 lines the S-methyl-5'-thioadenosine pocket.

It belongs to the spermidine/spermine synthase family. As to quaternary structure, homodimer or homotetramer.

The protein resides in the cytoplasm. It catalyses the reaction S-adenosyl 3-(methylsulfanyl)propylamine + putrescine = S-methyl-5'-thioadenosine + spermidine + H(+). The protein operates within amine and polyamine biosynthesis; spermidine biosynthesis; spermidine from putrescine: step 1/1. Its function is as follows. Catalyzes the irreversible transfer of a propylamine group from the amino donor S-adenosylmethioninamine (decarboxy-AdoMet) to putrescine (1,4-diaminobutane) to yield spermidine. The sequence is that of Polyamine aminopropyltransferase from Pseudomonas syringae pv. tomato (strain ATCC BAA-871 / DC3000).